The following is a 208-amino-acid chain: Large ribosomal subunit protein bL25 (208 aa).

The protein belongs to the bacterial ribosomal protein bL25 family. CTC subfamily. Part of the 50S ribosomal subunit; part of the 5S rRNA/L5/L18/L25 subcomplex. Contacts the 5S rRNA. Binds to the 5S rRNA independently of L5 and L18.

In terms of biological role, this is one of the proteins that binds to the 5S RNA in the ribosome where it forms part of the central protuberance. The polypeptide is Large ribosomal subunit protein bL25 (Bordetella pertussis (strain Tohama I / ATCC BAA-589 / NCTC 13251)).